The chain runs to 123 residues: Histone H2B.1/H2B.2 (123 aa).

A disordered region spans residues 1-30; that stretch reads MPPKVSGKAAKKAGKAQKNITKGDKKKNRK. The O-linked (GlcNAc) serine glycan is linked to Ser-110. Lys-118 is covalently cross-linked (Glycyl lysine isopeptide (Lys-Gly) (interchain with G-Cter in ubiquitin)).

The protein belongs to the histone H2B family. As to quaternary structure, the nucleosome is a histone octamer containing two molecules each of H2A, H2B, H3 and H4 assembled in one H3-H4 heterotetramer and two H2A-H2B heterodimers. The octamer wraps approximately 147 bp of DNA. Monoubiquitination of Lys-118 gives a specific tag for epigenetic transcriptional activation and is also prerequisite for histone H3 'Lys-4' and 'Lys-79' methylation. In terms of processing, glcNAcylation at Ser-110 promotes monoubiquitination of Lys-118. It fluctuates in response to extracellular glucose, and associates with transcribed genes.

Its subcellular location is the nucleus. It localises to the chromosome. In terms of biological role, core component of nucleosome. Nucleosomes wrap and compact DNA into chromatin, limiting DNA accessibility to the cellular machineries which require DNA as a template. Histones thereby play a central role in transcription regulation, DNA repair, DNA replication and chromosomal stability. DNA accessibility is regulated via a complex set of post-translational modifications of histones, also called histone code, and nucleosome remodeling. The polypeptide is Histone H2B.1/H2B.2 (Tigriopus californicus (Marine copepod)).